The chain runs to 707 residues: Coiled-coil domain-containing protein 177 (707 aa).

Disordered regions lie at residues 1-65 (MVDP…EGGR) and 183-294 (PSAG…SALT). 3 stretches are compositionally biased toward low complexity: residues 38–49 (AASSASASASAA), 183–215 (PSAG…PSSA), and 243–258 (ALSS…YSGE). At Ser-311 the chain carries Phosphoserine. A coiled-coil region spans residues 364 to 605 (GQWELQRVHA…LQHATQVAEE (242 aa)). 4 disordered regions span residues 372-426 (HAKQ…RSEE), 454-581 (KLQQ…EREH), 597-637 (QHAT…RDED), and 652-707 (ERSE…LDRK). Basic and acidic residues-rich tracts occupy residues 377-392 (RERE…EQGR), 399-426 (VEER…RSEE), 454-484 (KLQQ…ERAQ), 491-514 (QRQE…RHEA), 543-581 (ENYE…EREH), 618-637 (RLEK…RDED), and 652-664 (ERSE…RRSA). A compositionally biased stretch (low complexity) spans 665 to 675 (LESARSTARAS). The span at 677–707 (HVREKVREETNTRSFDRMVREAQLHASLDRK) shows a compositional bias: basic and acidic residues.

This is Coiled-coil domain-containing protein 177 (CCDC177) from Homo sapiens (Human).